A 166-amino-acid polypeptide reads, in one-letter code: Succinate dehydrogenase assembly factor 2, mitochondrial (166 aa).

The N-terminal 29 residues, 1 to 29 (MAVVAVFPALARMLAVSRRRLVSPSLSMT), are a transit peptide targeting the mitochondrion.

Belongs to the SDHAF2 family. In terms of assembly, interacts with SDHA within the SDH catalytic dimer.

The protein localises to the mitochondrion matrix. Its function is as follows. Plays an essential role in the assembly of succinate dehydrogenase (SDH), an enzyme complex (also referred to as respiratory complex II) that is a component of both the tricarboxylic acid (TCA) cycle and the mitochondrial electron transport chain, and which couples the oxidation of succinate to fumarate with the reduction of ubiquinone (coenzyme Q) to ubiquinol. Required for flavinylation (covalent attachment of FAD) of the flavoprotein subunit SDHA of the SDH catalytic dimer. The polypeptide is Succinate dehydrogenase assembly factor 2, mitochondrial (Bos taurus (Bovine)).